Here is a 466-residue protein sequence, read N- to C-terminus: A-type ATP synthase subunit B (466 aa).

Belongs to the ATPase alpha/beta chains family. In terms of assembly, has multiple subunits with at least A(3), B(3), C, D, E, F, H, I and proteolipid K(x).

It is found in the cell membrane. Its function is as follows. Component of the A-type ATP synthase that produces ATP from ADP in the presence of a proton gradient across the membrane. The B chain is a regulatory subunit. The polypeptide is A-type ATP synthase subunit B (Metallosphaera sedula (strain ATCC 51363 / DSM 5348 / JCM 9185 / NBRC 15509 / TH2)).